Consider the following 295-residue polypeptide: Iron-sulfur cluster carrier protein (295 aa).

Residue 38–45 participates in ATP binding; that stretch reads GKGGVGKS.

The protein belongs to the Mrp/NBP35 ATP-binding proteins family. Homodimer.

Functionally, binds and transfers iron-sulfur (Fe-S) clusters to target apoproteins. Can hydrolyze ATP. This is Iron-sulfur cluster carrier protein from Pyrococcus furiosus (strain ATCC 43587 / DSM 3638 / JCM 8422 / Vc1).